The sequence spans 437 residues: F-box only protein 9 (437 aa).

The disordered stretch occupies residues 1 to 26; that stretch reads MSAEAEEDCHSDADRVGDEGNESPAE. Ser2 carries the N-acetylalanine modification. A compositionally biased stretch (basic and acidic residues) spans 8–26; the sequence is DCHSDADRVGDEGNESPAE. Residue His10 is modified to Phosphoserine. One copy of the TPR repeat lies at 84–117; it reads ARELFLQAVEEEQNGALYEAIKFYRRAMQLVPDI. Ser126 is modified (phosphoserine). The region spanning 175 to 226 is the F-box domain; sequence QTHISVLPMEVLMYIFRWVVSSDLDLRSLEQLSLVCRGFYICARDPEIWRLA.

In terms of assembly, part of the SCF (SKP1-CUL1-F-box) E3 ubiquitin-protein ligase complex SCF(FBXO9) composed of CUL1, SKP1, RBX1 and FBXO9. Interacts with TTI1 and TELO2; when TTI1 and TELO2 are phosphorylated by CK2.

Its subcellular location is the cytoplasm. It participates in protein modification; protein ubiquitination. Its function is as follows. Substrate recognition component of a SCF (SKP1-CUL1-F-box protein) E3 ubiquitin-protein ligase complex which mediates the ubiquitination and subsequent proteasomal degradation of target proteins and plays a role in several biological processes such as cell cycle, cell proliferation, or maintenance of chromosome stability. Ubiquitinates mTORC1-bound TTI1 and TELO2 when they are phosphorylated by CK2 following growth factor deprivation, leading to their degradation. In contrast, does not mediate ubiquitination of TTI1 and TELO2 when they are part of the mTORC2 complex. As a consequence, mTORC1 is inactivated to restrain cell growth and protein translation, while mTORC2 is the activated due to the relief of feedback inhibition by mTORC1. Plays a role in maintaining epithelial cell survival by regulating the turn-over of chromatin modulator PRMT4 through ubiquitination and degradation by the proteasomal pathway. Also regulates PPARgamma stability by facilitating PPARgamma/PPARG ubiquitination and thereby plays a role in adipocyte differentiation. This is F-box only protein 9 (Fbxo9) from Mus musculus (Mouse).